A 79-amino-acid polypeptide reads, in one-letter code: D-alanyl carrier protein (79 aa).

Residues 1 to 77 form the Carrier domain; that stretch reads MDVKETILNI…KIISGVVELM (77 aa). O-(pantetheine 4'-phosphoryl)serine is present on Ser35.

The protein belongs to the DltC family. In terms of processing, 4'-phosphopantetheine is transferred from CoA to a specific serine of apo-DCP.

Its subcellular location is the cytoplasm. It functions in the pathway cell wall biogenesis; lipoteichoic acid biosynthesis. Its function is as follows. Carrier protein involved in the D-alanylation of lipoteichoic acid (LTA). The loading of thioester-linked D-alanine onto DltC is catalyzed by D-alanine--D-alanyl carrier protein ligase DltA. The DltC-carried D-alanyl group is further transferred to cell membrane phosphatidylglycerol (PG) by forming an ester bond, probably catalyzed by DltD. D-alanylation of LTA plays an important role in modulating the properties of the cell wall in Gram-positive bacteria, influencing the net charge of the cell wall. This Streptococcus suis (strain 98HAH33) protein is D-alanyl carrier protein.